Consider the following 287-residue polypeptide: tRNA uridine(34) hydroxylase (287 aa).

Residues 132-226 (QGRPVVMLDT…YFEEVGGAHY (95 aa)) enclose the Rhodanese domain. Residue C186 is the Cysteine persulfide intermediate of the active site.

Belongs to the TrhO family.

It catalyses the reaction uridine(34) in tRNA + AH2 + O2 = 5-hydroxyuridine(34) in tRNA + A + H2O. Its function is as follows. Catalyzes oxygen-dependent 5-hydroxyuridine (ho5U) modification at position 34 in tRNAs. In Paraburkholderia phytofirmans (strain DSM 17436 / LMG 22146 / PsJN) (Burkholderia phytofirmans), this protein is tRNA uridine(34) hydroxylase.